A 2595-amino-acid polypeptide reads, in one-letter code: MASQFHQLRILVWKNWLGVKRQPLWTLVLILWPVIIFIILAITRTKFPPTAKPTCYLAPRNLPSAGFFPFLQTLLCDTDSKCKDTPYGPRDLLRRKGIDGPLFKESEILKKPSNPKRDSNLSLRSTQVPERSHTSLATVPPRPSYDLEGTGTENFNGSQLLTRILGLEKLLKQNSTPEDIRRELCESYPGYTADYAFSWVTLGKNVFNKFCLSNMTLLESSLQELKYQVSQMSSDPDNQKRVFRGLVQVLSFFSQVQQQREVWQLLSSLPDVFQNGTSLSSLFGVLQKANRVLLVVQKVYPRVQTDEGFSTLQKSVKHLLNTLDSPMQGDNSTHAWSDDDEQTLSPSSLAAQLLILENFEDAILNISSNSPYSPYLACVRNMTDNLAKGSPDNLKLLQSTIHFRKSFLQNGSSEDSFPPFLEILKSKLSQLRNLTELLCESETFSSIKKSCQFSNMSFERLCEDHAFHVQLIEAAELGTDLTTGLLYHDNIISAKLRGLLTGDPSKINLNVDWLLEQALQMNYLENITRLIPTVEAMLHVNTSADASEKPGQLREMFKNIDLLKEDLRAIGMSNTSIDKLLAIPIPDNRAEIISRVFWLHSCDTNVTNPKLEDAMKEFCKLPLPERSHQSYLIGLTLLHYLDIYNFTYKVFFPRKDQKPMERMMELFIKLREILNQLASGTHPLLDKMRSLRQMHLPRSVPLTQAMYRNTRMNSPAGSFSTISQALCSQGITTEYLTAMLPSSQKPKGNHTKDFLTYKLTKEEIASKYGIPLNATPFCFSLYKDIINMPAGPVIWAFLKPMLLGKILYSPYNPTTKAIMEKSNVTLRQLAELREKSQEWMDKSPIFMNSFHLLNQTIPMLQNTLRNPFVQVFVKFSVGLDAVELLKQIDDLDVLRLKLVNNIDIIDQLNTLSSLTVNISSCVLYDRIQASDTVEEMETVAEQLYKSNELFGSVIFKLPSNGSLHRGFDPEKVSLPPIVRYTIRMSLKTAQTTRSIRTKIWAPGPHNSPSHNQIYGRAFIYLQDSIERAIIELQTGRNSQEVAVQVQAVPYPCFMKDNFLTSVSYSLPIVLMVAWVVFIAAFVKKLVYEKDLRLHEYMKMMGVNSCSHFFAWLIESIGFLLVTIAILIVILKFGNILPKTNGFILFLYFSDYSFSVIAMSYLISVFFNNTNIAALIGSLIYVIAFFPFIVLVTVEDELSYVIKVFMSLLSPTAFSYASQYIARYEEQGVGLQWENMYKSPVQDDTTSFGWLCCLILADSFIYFFIAWYVRNVFPGTYGMAAPWYFPILPSYWKERFGCAEVKHEKSNGLMFTNIMMQNTNPSASKTSPDCAFPSNIEPEPKDLQVGVALHGVTKIYGSKTAVENLNLNFYEGHITSLLGPNGAGKTTTISMLTGLFGATAGTIFVYGKDIKTDLNTVRKNMGVCMQHDVLFSYLTTKEHLLLYGSIKVPHWTKTQLHEEVKRTLKDTGLYSHRHKRVGTLSGGMKRKLSISIALIGGSRVVILDEPSTGVDPCSRRSIWDVISKNKTARTIILSTHHLDEAEVLSDRIAFLEQGGLRCCGSPFYLKEAFGDGYHLTLTKKKSPNLDTNAICDTVAVTAMIQSHLPEAYLKEDIGGELVYVLPPFSTKVSGAYLSLLRALDKGMGKLNIGCYGISDTTVEEVFLNLTKDSQKSSNMSLEHLTQRKVGNPSANGTSTPDDLSVSSSNFTDRDDKVLTRSEKLEGFGLLLKKIMAILIKRFHHTRRNWKGLIAQVILPIVFVATAMGLGTLRDSSNSYPEIMISPSIYGTSEQTAFYANFDPSTSGLVSALWNFPGIDNVCLNTSDLQCLKKDDLGKWNTSGEAIDNFGVCSCSDNVQECPKFNYHPPHRRTYSSQVIYNLTGKHMENYLITTANHFVQKRYGGWSFGMKLTNDLRFDVTAVPDNRTLAKVWYDPEGYHSLPAYLNSLNNFLLRVNMSEYDAARHGIIMYSHPYPGVQDQEQATISSLIDILVALSILMGYSVTTASFVTYIVREHQTKAKQLQHISGIGVTCYWVTNFIYDMVFYLVPVAFSIGVIAIFKLPAFYSGNNLGAVSLLLLLFGYATFSWMYLLAGLFHETGMAFITYVCVNLFFGINSIVSLSVVYFLSKEKPNDPTLELISETLKRIFLIFPQFCFGYGLIELSQQQAVLDFLKAYGVEYPSETFEMDKLGAMFVALVSQGTMFFLLRLLINEWLIKKLRLFFRKFTSSPIMETVDEDEDVRAERFRVESGAAEFDLVQLHRLTKTYQLIHKKIIAVNNISLGIPAGECFGLLGVNGAGKTTIFKMLTGDIIPSSGNILIRNKSGSLGHVDSHSSLVGYCPQEDALDDLVTVEEHLYFYARVHGIPEKDIKDTVHKLLRRLHLMAYKDRSTSMCSYGTKRKLSTALALIGKPSILLLDEPSSGMDPKSKRHLWRIISEEVQNKCSVILTSHSMEECEALCTRLAIMVNGRFQCIGSLQHIKSRFGRGFTVKVHLKNNKVSMETLTKFMQLHFPKTYLKDQHLSMLEYHVPVTAGGVANIFDLLETNKTALNITNFLVSQTTLEEVFINFAKDQKSYENVDTSSQGSTISVDSQEDQLDS.

The helical transmembrane segment at 23 to 43 (PLWTLVLILWPVIIFIILAIT) threads the bilayer. The span at 109–119 (LKKPSNPKRDS) shows a compositional bias: basic and acidic residues. Residues 109–143 (LKKPSNPKRDSNLSLRSTQVPERSHTSLATVPPRP) form a disordered region. N-linked (GlcNAc...) asparagine glycans are attached at residues asparagine 120, asparagine 156, asparagine 174, asparagine 214, asparagine 275, asparagine 331, asparagine 365, asparagine 381, asparagine 410, asparagine 433, asparagine 455, asparagine 526, asparagine 541, asparagine 574, asparagine 605, asparagine 645, asparagine 749, asparagine 773, asparagine 812, asparagine 823, asparagine 854, asparagine 917, and asparagine 960. Residues 120 to 137 (NLSLRSTQVPERSHTSLA) show a composition bias toward polar residues. The next 3 membrane-spanning stretches (helical) occupy residues 1062–1082 (VSYSLPIVLMVAWVVFIAAFV), 1109–1129 (FAWLIESIGFLLVTIAILIVI), and 1142–1162 (FILFLYFSDYSFSVIAMSYLI). Asparagine 1167 carries an N-linked (GlcNAc...) asparagine glycan. Transmembrane regions (helical) follow at residues 1171–1191 (IAALIGSLIYVIAFFPFIVLV), 1197–1217 (LSYVIKVFMSLLSPTAFSYAS), and 1247–1267 (FGWLCCLILADSFIYFFIAWY). N-linked (GlcNAc...) asparagine glycosylation is present at asparagine 1319. Residues 1346–1577 (VALHGVTKIY…FGDGYHLTLT (232 aa)) enclose the ABC transporter 1 domain. 1378 to 1385 (GPNGAGKT) lines the ATP pocket. Asparagine 1524, asparagine 1663, asparagine 1673, asparagine 1686, asparagine 1690, and asparagine 1704 each carry an N-linked (GlcNAc...) asparagine glycan. The tract at residues 1672-1703 (SNMSLEHLTQRKVGNPSANGTSTPDDLSVSSS) is disordered. The span at 1687-1703 (PSANGTSTPDDLSVSSS) shows a compositional bias: polar residues. The chain crosses the membrane as a helical span at residues 1747–1767 (LIAQVILPIVFVATAMGLGTL). 5 N-linked (GlcNAc...) asparagine glycosylation sites follow: asparagine 1819, asparagine 1835, asparagine 1876, asparagine 1921, and asparagine 1952. 7 helical membrane-spanning segments follow: residues 1979–1999 (ATISSLIDILVALSILMGYSV), 2035–2055 (FIYDMVFYLVPVAFSIGVIAI), 2072–2092 (LLLLLFGYATFSWMYLLAGLF), 2103–2123 (VCVNLFFGINSIVSLSVVYFL), 2143–2163 (IFLIFPQFCFGYGLIELSQQQ), 2187–2207 (GAMFVALVSQGTMFFLLRLLI), and 2270–2290 (IIAVNNISLGIPAGECFGLLG). The 236-residue stretch at 2254–2489 (VQLHRLTKTY…FGRGFTVKVH (236 aa)) folds into the ABC transporter 2 domain. ATP is bound at residue 2290–2297 (GVNGAGKT). Residues asparagine 2318, asparagine 2542, and asparagine 2547 are each glycosylated (N-linked (GlcNAc...) asparagine). Positions 2575 to 2587 (VDTSSQGSTISVD) are enriched in polar residues. The disordered stretch occupies residues 2575–2595 (VDTSSQGSTISVDSQEDQLDS).

It belongs to the ABC transporter superfamily. ABCA family. Interacts with NR1H2 and ABCA1; this interaction is required for ABCA1 localization to the cell surface and is necessary for its normal activity and stability. As to expression, expressed in a number of other tissues besides skin, including heart, intestine, stomach, and kidney. Expressed mainly in the granular layer of the skin. Expressed in lung. Expressed in alpha and beta cells of pancreatic islets.

Its subcellular location is the cytoplasmic vesicle. The protein localises to the secretory vesicle membrane. The protein resides in the golgi apparatus membrane. It carries out the reaction ATP + H2O + phospholipidSide 1 = ADP + phosphate + phospholipidSide 2.. It catalyses the reaction a beta-D-glucosylceramide(in) + ATP + H2O = a beta-D-glucosylceramide(out) + ADP + phosphate + H(+). In terms of biological role, transports lipids such as glucosylceramides from the outer to the inner leaflet of lamellar granules (LGs) membrane, whereby the lipids are finally transported to the keratinocyte periphery via the trans-Golgi network and LGs and released to the apical surface of the granular keratinocytes to form lipid lamellae in the stratum corneum of the epidermis, which is essential for skin barrier function. In the meantime, participates in the transport of the lamellar granules-associated proteolytic enzymes, in turn regulates desquamation and keratinocyte differentiation. Furthermore, is essential for the regulation of cellular cholesterol homeostasis by regulating ABCA1-dependent cholesterol efflux from macrophages through interaction with NR1H2 and ABCA1. Plays pleiotropic roles in regulating glucose stimulated insulin secretion from beta cells, regulating the morphology and fusion of insulin granules, lipid raft abundance and the actin cytoskeleton. Also involved in lung surfactant biogenesis. The chain is Glucosylceramide transporter ABCA12 from Mus musculus (Mouse).